The chain runs to 159 residues: Globin C, coelomic (159 aa).

Gly-2 carries the N-acetylglycine modification. In terms of domain architecture, Globin spans 12–158 (DLTLAQKKIV…VQAVLLVKHG (147 aa)). 2 residues coordinate heme b: His-74 and His-105.

The protein belongs to the globin family. In terms of assembly, monomer.

This chain is Globin C, coelomic, found in Molpadia arenicola (Sea cucumber).